Consider the following 322-residue polypeptide: MKQSKLGVLMVNLGTPDAPTPQAVKRYLAEFLSDRRVVDTSPWLWWPLLRGVILPIRSPRVAKLYQSVWMDEGSPLLVYSRRQQKALAERMPEIPVELGMSYGSPNLPDAIDKLLAQGVTKLVVLPLYPQYSCSTSAAVWDAVARILKGYRRLPSISFIRDYAEHPAYISALKQSVENSFVQHGKPDRLVLSFHGIPKRYAQLGDDYPQRCEDTSRALRAEIALPAEQIMMTYQSRFGREPWLTPYTDETLKSLPSQGVKHIQLICPGFSADCLETLEEIKEQNREVFIHAGGEKFEYIPALNDDKGHIDLLEQLVRDHLSC.

Residues His194 and Glu275 each contribute to the Fe cation site.

Belongs to the ferrochelatase family.

The protein resides in the cytoplasm. The catalysed reaction is heme b + 2 H(+) = protoporphyrin IX + Fe(2+). Its pathway is porphyrin-containing compound metabolism; protoheme biosynthesis; protoheme from protoporphyrin-IX: step 1/1. In terms of biological role, catalyzes the ferrous insertion into protoporphyrin IX. The sequence is that of Ferrochelatase from Yersinia enterocolitica.